The chain runs to 264 residues: Small ribosomal subunit protein eS1A (264 aa).

Residues 233–264 (GEGGGTGKPAGDETGAKVERADGYEPPVQESV) are disordered. Residues 242 to 255 (AGDETGAKVERADG) are compositionally biased toward basic and acidic residues.

It belongs to the eukaryotic ribosomal protein eS1 family. As to quaternary structure, component of the small ribosomal subunit. Mature ribosomes consist of a small (40S) and a large (60S) subunit. The 40S subunit contains about 33 different proteins and 1 molecule of RNA (18S). The 60S subunit contains about 49 different proteins and 3 molecules of RNA (28S, 5.8S and 5S). Part of the small subunit (SSU) processome, composed of more than 70 proteins and the RNA chaperone small nucleolar RNA (snoRNA) U3.

It localises to the cytoplasm. Its subcellular location is the nucleus. The protein localises to the nucleolus. Component of the small ribosomal subunit. The ribosome is a large ribonucleoprotein complex responsible for the synthesis of proteins in the cell. Part of the small subunit (SSU) processome, first precursor of the small eukaryotic ribosomal subunit. During the assembly of the SSU processome in the nucleolus, many ribosome biogenesis factors, an RNA chaperone and ribosomal proteins associate with the nascent pre-rRNA and work in concert to generate RNA folding, modifications, rearrangements and cleavage as well as targeted degradation of pre-ribosomal RNA by the RNA exosome. May play a role during erythropoiesis. The chain is Small ribosomal subunit protein eS1A (rps3a-a) from Xenopus laevis (African clawed frog).